A 396-amino-acid chain; its full sequence is Putative transposase y4rJ (396 aa).

The protein belongs to the transposase 20 family.

The chain is Putative transposase y4rJ from Sinorhizobium fredii (strain NBRC 101917 / NGR234).